A 123-amino-acid chain; its full sequence is Modulator protein MzrA (123 aa).

Over 1–8 the chain is Cytoplasmic; that stretch reads MIKRPRWQ. A helical transmembrane segment spans residues 9–29; it reads YVLLIALALLALATLLVPCMV. Residues 30 to 123 lie on the Periplasmic side of the membrane; that stretch reads RTESELRIRA…EFARAPLNLG (94 aa).

Belongs to the MzrA family. Interacts with EnvZ.

The protein resides in the cell inner membrane. Functionally, modulates the activity of the EnvZ/OmpR two-component regulatory system, probably by directly modulating EnvZ enzymatic activity and increasing stability of phosphorylated OmpR. In Serratia proteamaculans (strain 568), this protein is Modulator protein MzrA.